A 415-amino-acid polypeptide reads, in one-letter code: uncharacterized protein (415 aa).

This is an uncharacterized protein from Rickettsia prowazekii (strain Madrid E).